Consider the following 185-residue polypeptide: Ribosome-recycling factor (185 aa).

Belongs to the RRF family.

Its subcellular location is the cytoplasm. Responsible for the release of ribosomes from messenger RNA at the termination of protein biosynthesis. May increase the efficiency of translation by recycling ribosomes from one round of translation to another. This chain is Ribosome-recycling factor, found in Chromohalobacter salexigens (strain ATCC BAA-138 / DSM 3043 / CIP 106854 / NCIMB 13768 / 1H11).